The primary structure comprises 128 residues: Translation initiation factor 5A (128 aa).

Lys35 is subject to Hypusine.

Belongs to the eIF-5A family.

The protein resides in the cytoplasm. Functionally, functions by promoting the formation of the first peptide bond. The polypeptide is Translation initiation factor 5A (eif5a) (Methanosarcina acetivorans (strain ATCC 35395 / DSM 2834 / JCM 12185 / C2A)).